Reading from the N-terminus, the 215-residue chain is MKDTKAFNEQRAEIYWWLSSLFAKELTQEELDHYHSVEIRSFLTGLGENETLKPAIDSLVDALNRLQTREDAQLELSADFCDLFLKTDKHGALPYASMYIGQTGLLNDKPAKDMEEIMAKHNLVVNQDLKEPADHIAIELDFLGNLIIRSNETELEEELEKSFAVQQQFIEQQLLTWVPKFNVKCHDIDTFGFYASVSSLLLAFCKLDTQYLAGE.

This sequence belongs to the TorD/DmsD family. TorD subfamily.

The protein localises to the cytoplasm. Involved in the biogenesis of TorA. Acts on TorA before the insertion of the molybdenum cofactor and, as a result, probably favors a conformation of the apoenzyme that is competent for acquiring the cofactor. In Vibrio atlanticus (strain LGP32) (Vibrio splendidus (strain Mel32)), this protein is Chaperone protein TorD.